Reading from the N-terminus, the 825-residue chain is Cytosolic phospholipase A2 delta (825 aa).

A C2 domain is found at Ser-14–Phe-133. Positions 47, 53, 103, 105, and 111 each coordinate Ca(2+). A PLA2c domain is found at Asp-281–Thr-825. Gly-339–Gly-340 lines the substrate pocket. Residue Ser-370 is the Nucleophile of the active site. The active-site Proton acceptor is Asp-654.

Requires Ca(2+) as cofactor. In terms of tissue distribution, weakly or not expressed in most tissues. Detected in placenta of 17.5 dpc embryos.

It localises to the cytoplasm. It is found in the cytosol. Its subcellular location is the membrane. The catalysed reaction is a 1,2-diacyl-sn-glycero-3-phosphocholine + H2O = a 1-acyl-sn-glycero-3-phosphocholine + a fatty acid + H(+). It carries out the reaction 1-hexadecanoyl-2-(5Z,8Z,11Z,14Z-eicosatetraenoyl)-sn-glycero-3-phosphocholine + H2O = 1-hexadecanoyl-sn-glycero-3-phosphocholine + (5Z,8Z,11Z,14Z)-eicosatetraenoate + H(+). The enzyme catalyses 1-hexadecanoyl-2-(9Z,12Z-octadecadienoyl)-sn-glycero-3-phosphocholine + H2O = (9Z,12Z)-octadecadienoate + 1-hexadecanoyl-sn-glycero-3-phosphocholine + H(+). It catalyses the reaction 1-hexadecanoyl-2-(9Z-octadecenoyl)-sn-glycero-3-phosphocholine + H2O = 1-hexadecanoyl-sn-glycero-3-phosphocholine + (9Z)-octadecenoate + H(+). The catalysed reaction is 1-hexadecanoyl-2-(5Z,8Z,11Z,14Z-eicosatetraenoyl)-sn-glycero-3-phosphoethanolamine + H2O = 1-hexadecanoyl-sn-glycero-3-phosphoethanolamine + (5Z,8Z,11Z,14Z)-eicosatetraenoate + H(+). It carries out the reaction 1-hexadecanoyl-2-(9Z,12Z-octadecadienoyl)-sn-glycero-3-phosphoethanolamine + H2O = 1-hexadecanoyl-sn-glycero-3-phosphoethanolamine + (9Z,12Z)-octadecadienoate + H(+). The enzyme catalyses 1-hexadecanoyl-sn-glycero-3-phosphocholine + H2O = sn-glycerol 3-phosphocholine + hexadecanoate + H(+). Its pathway is lipid metabolism; fatty acid metabolism. Its activity is regulated as follows. Stimulated by cytosolic Ca(2+). Its function is as follows. Calcium-dependent phospholipase A2 that selectively hydrolyzes glycerophospholipids in the sn-2 position. Compared to its human ortholog, may have no preference for the fatty acid found at the sn-2 position. This chain is Cytosolic phospholipase A2 delta, found in Mus musculus (Mouse).